We begin with the raw amino-acid sequence, 472 residues long: MKQDVILVLDCGATNVRAIAVDRQGKIVARASTANASDIAAENSAWHQWSLDAILQRFADCCRSLSSALSECVVRGITVTTFGVDGALVDAQGKLLYPVISWKCPRTAAVMETIERFISPRQLQTLSGVGAFSFNTLYKLVWLKENHPRLLEQAHCWLFISSLINHRLTGEFTTDITMAGTSQLLDIHQRDFSPEILQATGLARRLFPRIVEAGAPIGTLQTDAARLLGLPAGVPVISAEHDTQFALFGAGAQQGEPVLSSGTWEILMVRSGQVDTSLLSQYPGSTCELDSQSGLYNPGMQWLASGVLEWVRKLLWTPETPWQTLIDEARAIPAGAEGVRMQCDLLACQNAGWQGVTLNTTRGHFYRAALEGLTAQLQRNLRTLEKIGHFNATELLLVGGGSRNALWNQIKANQLDIPIKVLDDAETTVAGAAMFGWYGVGEFSSPEQARAQVNYQYRYFWPQTEPEIIEGV.

This sequence belongs to the FGGY kinase family. Requires a divalent metal cation as cofactor.

It carries out the reaction L-fuculose + ATP = L-fuculose 1-phosphate + ADP + H(+). Its pathway is carbohydrate degradation; L-fucose degradation; L-lactaldehyde and glycerone phosphate from L-fucose: step 2/3. Its function is as follows. Catalyzes the phosphorylation of L-fuculose. The protein is L-fuculokinase of Salmonella typhi.